The chain runs to 119 residues: T cell receptor alpha variable 29/delta variable 5 (119 aa).

The N-terminal stretch at 1–21 (MAMLLGASVLILWLQPDWVNS) is a signal peptide. Residues 22–119 (QQKNDDQQVK…DSAVYFCAAS (98 aa)) form the Ig-like domain. The cysteines at positions 49 and 116 are disulfide-linked. Asn93 carries an N-linked (GlcNAc...) asparagine glycan.

Alpha-beta TR is a heterodimer composed of an alpha and beta chain; disulfide-linked. The alpha-beta TR is associated with the transmembrane signaling CD3 coreceptor proteins to form the TR-CD3 (TcR or TCR). The assembly of alpha-beta TR heterodimers with CD3 occurs in the endoplasmic reticulum where a single alpha-beta TR heterodimer associates with one CD3D-CD3E heterodimer, one CD3G-CD3E heterodimer and one CD247 homodimer forming a stable octameric structure. CD3D-CD3E and CD3G-CD3E heterodimers preferentially associate with TR alpha and TR beta chains, respectively. The association of the CD247 homodimer is the last step of TcR assembly in the endoplasmic reticulum and is required for transport to the cell surface.

Its subcellular location is the cell membrane. V region of the variable domain of T cell receptor (TR) alpha chain that participates in the antigen recognition. Alpha-beta T cell receptors are antigen specific receptors which are essential to the immune response and are present on the cell surface of T lymphocytes. Recognize peptide-major histocompatibility (MH) (pMH) complexes that are displayed by antigen presenting cells (APC), a prerequisite for efficient T cell adaptive immunity against pathogens. Binding of alpha-beta TR to pMH complex initiates TR-CD3 clustering on the cell surface and intracellular activation of LCK that phosphorylates the ITAM motifs of CD3G, CD3D, CD3E and CD247 enabling the recruitment of ZAP70. In turn ZAP70 phosphorylates LAT, which recruits numerous signaling molecules to form the LAT signalosome. The LAT signalosome propagates signal branching to three major signaling pathways, the calcium, the mitogen-activated protein kinase (MAPK) kinase and the nuclear factor NF-kappa-B (NF-kB) pathways, leading to the mobilization of transcription factors that are critical for gene expression and essential for T cell growth and differentiation. The T cell repertoire is generated in the thymus, by V-(D)-J rearrangement. This repertoire is then shaped by intrathymic selection events to generate a peripheral T cell pool of self-MH restricted, non-autoaggressive T cells. Post-thymic interaction of alpha-beta TR with the pMH complexes shapes TR structural and functional avidity. The chain is T cell receptor alpha variable 29/delta variable 5 from Homo sapiens (Human).